We begin with the raw amino-acid sequence, 32 residues long: Cytochrome b6-f complex subunit 7 (32 aa).

A helical membrane pass occupies residues 9–27 (AVVFWVLIPVGLAGGALLL).

The protein belongs to the PetM family. In terms of assembly, the 4 large subunits of the cytochrome b6-f complex are cytochrome b6, subunit IV (17 kDa polypeptide, PetD), cytochrome f and the Rieske protein, while the 4 small subunits are PetG, PetL, PetM and PetN. The complex functions as a dimer.

It localises to the cellular thylakoid membrane. In terms of biological role, component of the cytochrome b6-f complex, which mediates electron transfer between photosystem II (PSII) and photosystem I (PSI), cyclic electron flow around PSI, and state transitions. This chain is Cytochrome b6-f complex subunit 7, found in Synechococcus sp. (strain CC9311).